We begin with the raw amino-acid sequence, 572 residues long: Proline--tRNA ligase (572 aa).

Belongs to the class-II aminoacyl-tRNA synthetase family. ProS type 1 subfamily. Homodimer.

It is found in the cytoplasm. It catalyses the reaction tRNA(Pro) + L-proline + ATP = L-prolyl-tRNA(Pro) + AMP + diphosphate. In terms of biological role, catalyzes the attachment of proline to tRNA(Pro) in a two-step reaction: proline is first activated by ATP to form Pro-AMP and then transferred to the acceptor end of tRNA(Pro). As ProRS can inadvertently accommodate and process non-cognate amino acids such as alanine and cysteine, to avoid such errors it has two additional distinct editing activities against alanine. One activity is designated as 'pretransfer' editing and involves the tRNA(Pro)-independent hydrolysis of activated Ala-AMP. The other activity is designated 'posttransfer' editing and involves deacylation of mischarged Ala-tRNA(Pro). The misacylated Cys-tRNA(Pro) is not edited by ProRS. The polypeptide is Proline--tRNA ligase (Salmonella dublin (strain CT_02021853)).